Reading from the N-terminus, the 792-residue chain is Phenylalanine--tRNA ligase beta subunit (792 aa).

In terms of domain architecture, tRNA-binding spans 40-156 (FPRTENLIVG…AKLNDIDPLK (117 aa)). Positions 404-472 (LKDNLIDFDS…KKINVNNLEL (69 aa)) constitute a B5 domain. Residues D450, D456, E459, and E460 each contribute to the Mg(2+) site.

Belongs to the phenylalanyl-tRNA synthetase beta subunit family. Type 1 subfamily. As to quaternary structure, tetramer of two alpha and two beta subunits. The cofactor is Mg(2+).

It is found in the cytoplasm. It catalyses the reaction tRNA(Phe) + L-phenylalanine + ATP = L-phenylalanyl-tRNA(Phe) + AMP + diphosphate + H(+). This chain is Phenylalanine--tRNA ligase beta subunit, found in Malacoplasma penetrans (strain HF-2) (Mycoplasma penetrans).